Consider the following 450-residue polypeptide: 23S rRNA (uracil(1939)-C(5))-methyltransferase RlmD (450 aa).

In terms of domain architecture, TRAM spans 15–73 (KAVPAKNLTVTVASLDPFGQGVARHEGKTVFVTGVLPGEQAEVQLTEEKRQFSHAKLKR). [4Fe-4S] cluster is bound by residues Cys-86, Cys-92, Cys-95, and Cys-173. Positions 276, 305, 310, 326, 353, and 374 each coordinate S-adenosyl-L-methionine. Cys-400 serves as the catalytic Nucleophile.

The protein belongs to the class I-like SAM-binding methyltransferase superfamily. RNA M5U methyltransferase family. RlmD subfamily.

The catalysed reaction is uridine(1939) in 23S rRNA + S-adenosyl-L-methionine = 5-methyluridine(1939) in 23S rRNA + S-adenosyl-L-homocysteine + H(+). Catalyzes the formation of 5-methyl-uridine at position 1939 (m5U1939) in 23S rRNA. In Pectobacterium atrosepticum (strain SCRI 1043 / ATCC BAA-672) (Erwinia carotovora subsp. atroseptica), this protein is 23S rRNA (uracil(1939)-C(5))-methyltransferase RlmD.